The primary structure comprises 277 residues: MDIALLIKAAIMGIVEGLTEFLPISSTGHLILAGALLGFDDDKAKVFDIAIQTGAIFAVILVYWQKIRSTLIALPNEKQAQQFALNVLVAFVPAVVLGLLFGKAIKAHLFTPVVVASAFIVGGFIILWAEKRQQRNPATIRIHDVESMSTMDALKVGLVQCLAMIPGTSRSGSTIIGGMLLGLSRKAATDFSFYLAIPTLIGAGAYSLFKDRALLSMADAPMFGVGLLFSFLSAWLCIRWLLRYIASHDFVPFAWYRIAFGIVVLATAWSGVVTWAE.

7 consecutive transmembrane segments (helical) span residues 3–23, 44–64, 82–102, 109–129, 189–209, 218–238, and 253–273; these read IALL…EFLP, AKVF…LVYW, QFAL…LLFG, LFTP…ILWA, TDFS…YSLF, ADAP…WLCI, and FAWY…SGVV.

This sequence belongs to the UppP family.

The protein localises to the cell inner membrane. The catalysed reaction is di-trans,octa-cis-undecaprenyl diphosphate + H2O = di-trans,octa-cis-undecaprenyl phosphate + phosphate + H(+). In terms of biological role, catalyzes the dephosphorylation of undecaprenyl diphosphate (UPP). Confers resistance to bacitracin. In Polaromonas naphthalenivorans (strain CJ2), this protein is Undecaprenyl-diphosphatase.